The primary structure comprises 361 residues: Phosphoserine aminotransferase (361 aa).

Arginine 43 contacts L-glutamate. Pyridoxal 5'-phosphate contacts are provided by residues 77–78 (AS), tryptophan 103, threonine 153, aspartate 173, and glutamine 196. The residue at position 197 (lysine 197) is an N6-(pyridoxal phosphate)lysine. 238 to 239 (NT) is a pyridoxal 5'-phosphate binding site.

It belongs to the class-V pyridoxal-phosphate-dependent aminotransferase family. SerC subfamily. As to quaternary structure, homodimer. Pyridoxal 5'-phosphate is required as a cofactor.

The protein localises to the cytoplasm. It catalyses the reaction O-phospho-L-serine + 2-oxoglutarate = 3-phosphooxypyruvate + L-glutamate. The catalysed reaction is 4-(phosphooxy)-L-threonine + 2-oxoglutarate = (R)-3-hydroxy-2-oxo-4-phosphooxybutanoate + L-glutamate. The protein operates within amino-acid biosynthesis; L-serine biosynthesis; L-serine from 3-phospho-D-glycerate: step 2/3. Its function is as follows. Catalyzes the reversible conversion of 3-phosphohydroxypyruvate to phosphoserine and of 3-hydroxy-2-oxo-4-phosphonooxybutanoate to phosphohydroxythreonine. The chain is Phosphoserine aminotransferase from Bacillus anthracis (strain A0248).